A 185-amino-acid polypeptide reads, in one-letter code: Elongation factor P (185 aa).

Belongs to the elongation factor P family.

The protein resides in the cytoplasm. It participates in protein biosynthesis; polypeptide chain elongation. Its function is as follows. Involved in peptide bond synthesis. Stimulates efficient translation and peptide-bond synthesis on native or reconstituted 70S ribosomes in vitro. Probably functions indirectly by altering the affinity of the ribosome for aminoacyl-tRNA, thus increasing their reactivity as acceptors for peptidyl transferase. The protein is Elongation factor P of Clostridium tetani (strain Massachusetts / E88).